The following is a 956-amino-acid chain: MAM domain-containing glycosylphosphatidylinositol anchor protein 1 (956 aa).

An N-terminal signal peptide occupies residues 1 to 18; that stretch reads MEVTCLLLLALIPFHCRG. Ig-like domains lie at 24–123 and 132–230; these read PAQA…KSIR and PVLT…KAIT. N-linked (GlcNAc...) asparagine glycosylation occurs at Asn-42. Intrachain disulfides connect Cys-60-Cys-108 and Cys-157-Cys-214. Asn-235, Asn-247, Asn-257, and Asn-307 each carry an N-linked (GlcNAc...) asparagine glycan. 4 Ig-like domains span residues 240–323, 338–432, 440–532, and 539–650; these read PALK…KTVN, PDMI…IEVN, PTIS…AQVQ, and PEVE…PTRS. 2 cysteine pairs are disulfide-bonded: Cys-262–Cys-308 and Cys-357–Cys-415. Residue Asn-432 is glycosylated (N-linked (GlcNAc...) asparagine). 2 cysteine pairs are disulfide-bonded: Cys-463–Cys-514 and Cys-560–Cys-616. Positions 627–744 constitute a Fibronectin type-III domain; sequence CLFQVSAKAY…SRIIHYTEPI (118 aa). In terms of domain architecture, MAM spans 752–919; the sequence is NTCHFEDEKI…VTLKKGECPR (168 aa). The segment covering 780–789 has biased composition (polar residues); that stretch reads LTQNPKRSPN. Residues 780–799 are disordered; it reads LTQNPKRSPNTGPPTDISGT. Ser-933 carries GPI-anchor amidated serine lipidation. Residues 934 to 956 constitute a propeptide, removed in mature form; it reads GAPRLSSLQLWGSMAIFLLALQR.

As to quaternary structure, interacts heterophilically through its MAM domain with proteins in axon-rich regions and through its Ig-like domains with proteins in differentiating muscle. Interacts (through the Ig-like domains) with NLGN2. Expressed by neurons in layers 2 and 3 of the cortex during their migration and settling in the cortical plate. Also found in layers 4 and 6a. From 9.5 dpc-13.5 dpc, detected in the marginal zone of the developing cortex. At 16.5 dpc, modest expression is found in the intermediate zone. At postnatal day 1, evident in the superficial cortical plate. By postnatal day 7, expression is limited to layers 2 and 3 throughout most of the cortex.

It localises to the cell membrane. Functionally, required for radial migration of cortical neurons in the superficial layer of the neocortex. Plays a role in the formation or maintenance of inhibitory synapses. May function by inhibiting the activity of NLGN2. The polypeptide is MAM domain-containing glycosylphosphatidylinositol anchor protein 1 (Mus musculus (Mouse)).